The following is a 289-amino-acid chain: Oxygen-dependent coproporphyrinogen-III oxidase (289 aa).

Ser82 contacts substrate. 2 residues coordinate a divalent metal cation: His86 and His96. The Proton donor role is filled by His96. 98–100 serves as a coordination point for substrate; that stretch reads NYR. His130 and His160 together coordinate a divalent metal cation. Residues 224–259 form an important for dimerization region; it reads YVEFNLVWDRGTIFGLQTNGRIESILMSMPPLVRWE.

The protein belongs to the aerobic coproporphyrinogen-III oxidase family. Homodimer. The cofactor is a divalent metal cation.

The protein resides in the cytoplasm. It catalyses the reaction coproporphyrinogen III + O2 + 2 H(+) = protoporphyrinogen IX + 2 CO2 + 2 H2O. The protein operates within porphyrin-containing compound metabolism; protoporphyrin-IX biosynthesis; protoporphyrinogen-IX from coproporphyrinogen-III (O2 route): step 1/1. Functionally, involved in the heme and chlorophyll biosynthesis. Catalyzes the aerobic oxidative decarboxylation of propionate groups of rings A and B of coproporphyrinogen-III to yield the vinyl groups in protoporphyrinogen-IX. This Gloeobacter violaceus (strain ATCC 29082 / PCC 7421) protein is Oxygen-dependent coproporphyrinogen-III oxidase.